The following is a 352-amino-acid chain: C-C chemokine receptor type 5 (352 aa).

Residues 1–30 (MDYQVSSPTYDIDYYTSEPCQKVNVKQIAA) are Extracellular-facing. Residue Tyr-3 is modified to Sulfotyrosine. O-linked (GalNAc...) serine glycans are attached at residues Ser-6 and Ser-7. Tyr-10, Tyr-14, and Tyr-15 each carry sulfotyrosine. Intrachain disulfides connect Cys-20/Cys-269 and Cys-101/Cys-178. Residues 31-58 (RLLPPLYSLVFIFGFVGNILVVLILINC) traverse the membrane as a helical segment. Over 59-68 (KRLKSMTDIY) the chain is Cytoplasmic. Residues 69–89 (LLNLAISDLFFLLTVPFWAHY) form a helical membrane-spanning segment. The Extracellular portion of the chain corresponds to 90-102 (AAAQWDFGNTMCQ). A helical membrane pass occupies residues 103 to 124 (LLTGLYFIGFFSGIFFIILLTI). The Cytoplasmic portion of the chain corresponds to 125–141 (DRYLAIVHAVFALKART). The helical transmembrane segment at 142–166 (VTFGVVTSVITWVVAVFASLPGIIF) threads the bilayer. The Extracellular portion of the chain corresponds to 167 to 198 (TRSQREGLHYTCSSHFPYSQYQFWKNFQTLKI). A helical transmembrane segment spans residues 199–218 (VILGLVLPLLVMVICYSGIL). Residues 219–235 (KTLLRCRNEKKRHRAVR) are Cytoplasmic-facing. A helical transmembrane segment spans residues 236–260 (LIFTIMIVYFLFWAPYNIVLLLNTF). Over 261 to 277 (QEFFGLNNCSSSNRLDQ) the chain is Extracellular. The chain crosses the membrane as a helical span at residues 278-301 (AMQVTETLGMTHCCINPIIYAFVG). Residues 302-352 (EKFRNYLLVFFQKHIAKRFCKCCRIFQQEAPERASSVYTRSTGEQEISVGL) lie on the Cytoplasmic side of the membrane. S-palmitoyl cysteine attachment occurs at residues Cys-321, Cys-323, and Cys-324. Phosphoserine; by BARK1 occurs at positions 336, 337, 342, and 349.

This sequence belongs to the G-protein coupled receptor 1 family. Interacts with PRAF2. Efficient ligand binding to CCL3/MIP-1alpha and CCL4/MIP-1beta requires sulfation, O-glycosylation and sialic acid modifications. Glycosylation on Ser-6 is required for efficient binding of CCL4. Interacts with GRK2. Interacts with ARRB1 and ARRB2. Interacts with CNIH4. Interacts with S100A4; this interaction stimulates T-lymphocyte chemotaxis. Sulfated on at least 2 of the N-terminal tyrosines. Sulfation is required for efficient binding of the chemokines, CCL3 and CCL4. In terms of processing, palmitoylation in the C-terminal is important for cell surface expression. Post-translationally, phosphorylation on serine residues in the C-terminal is stimulated by binding CC chemokines especially by APO-RANTES. O-glycosylated, but not N-glycosylated. Ser-6 appears to be the major site even if Ser-7 may be also O-glycosylated. Also sialylated glycans present which contribute to chemokine binding. Thr-16 and Ser-17 may also be glycosylated and, if so, with small moieties such as a T-antigen.

The protein localises to the cell membrane. Receptor for a number of inflammatory CC-chemokines including CCL3/MIP-1-alpha, CCL4/MIP-1-beta and RANTES and subsequently transduces a signal by increasing the intracellular calcium ion level. May play a role in the control of granulocytic lineage proliferation or differentiation. Participates in T-lymphocyte migration to the infection site by acting as a chemotactic receptor. In Colobus polykomos (Western black-and-white colobus monkey), this protein is C-C chemokine receptor type 5 (CCR5).